The chain runs to 120 residues: Ribosome-binding factor A (120 aa).

It belongs to the RbfA family. Monomer. Binds 30S ribosomal subunits, but not 50S ribosomal subunits or 70S ribosomes.

The protein localises to the cytoplasm. In terms of biological role, one of several proteins that assist in the late maturation steps of the functional core of the 30S ribosomal subunit. Associates with free 30S ribosomal subunits (but not with 30S subunits that are part of 70S ribosomes or polysomes). Required for efficient processing of 16S rRNA. May interact with the 5'-terminal helix region of 16S rRNA. This chain is Ribosome-binding factor A, found in Lactobacillus delbrueckii subsp. bulgaricus (strain ATCC 11842 / DSM 20081 / BCRC 10696 / JCM 1002 / NBRC 13953 / NCIMB 11778 / NCTC 12712 / WDCM 00102 / Lb 14).